We begin with the raw amino-acid sequence, 746 residues long: Alpha-1,4-glucan:maltose-1-phosphate maltosyltransferase (746 aa).

The segment at 1–43 (MAAVQHRATTRTSNTDNSTTKTKSKATSARKSPATKRKRVSAE) is disordered. Positions 10 to 32 (TRTSNTDNSTTKTKSKATSARKS) are enriched in low complexity. Alpha-maltose 1-phosphate is bound by residues lysine 343, glutamine 403, and aspartate 438. The Nucleophile role is filled by aspartate 473. Residue asparagine 474 participates in alpha-maltose 1-phosphate binding. Glutamate 502 acts as the Proton donor in catalysis. 612–613 (KY) provides a ligand contact to alpha-maltose 1-phosphate.

Belongs to the glycosyl hydrolase 13 family. GlgE subfamily. As to quaternary structure, homodimer.

The catalysed reaction is alpha-maltose 1-phosphate + [(1-&gt;4)-alpha-D-glucosyl](n) = [(1-&gt;4)-alpha-D-glucosyl](n+2) + phosphate. Maltosyltransferase that uses maltose 1-phosphate (M1P) as the sugar donor to elongate linear or branched alpha-(1-&gt;4)-glucans. Is involved in a branched alpha-glucan biosynthetic pathway from trehalose, together with TreS, Mak and GlgB. This is Alpha-1,4-glucan:maltose-1-phosphate maltosyltransferase from Bifidobacterium longum (strain NCC 2705).